A 424-amino-acid polypeptide reads, in one-letter code: Probable ribonuclease FAU-1 (424 aa).

Belongs to the FAU-1 family.

Probable RNase involved in rRNA stability through maturation and/or degradation of precursor rRNAs. Binds to RNA in loop regions with AU-rich sequences. This chain is Probable ribonuclease FAU-1, found in Saccharolobus solfataricus (strain ATCC 35092 / DSM 1617 / JCM 11322 / P2) (Sulfolobus solfataricus).